The following is a 513-amino-acid chain: MQLNSTEISELIKQRIAQFNVVSEAHNEGTIVSVSDGVIRIHGLADCMQGEMISLPGNRYAIALNLERDSVGAVVMGPYADLAEGMKVKCTGRILEVPVGRGLLGRVVNTLGAPIDGKGPVEHDGFSPIEVIAPGVIDRQSVDQPVQTGYKSVDAMIPIGRGQRELIIGDRQTGKTAMAIDAIINQRDSGIKCVYVAIGQKASTIANVVRKLEEHGALSNTIVVVATASESAALQYLAPYAGCAMGEYFRDRGEDALIVYDDLSKQAVAYRQVSLLLRRPPGREAFPGDVFYLHSRLLERASRVNAEYVENFTKGAVKGKTGSLTALPIIETQAGDVSAFVPTNVISITDGQIFLETNLFNSGIRPAVNPGISVSRVGGAAQTKIIKKLSGGIRTALAQYRELAAFSQFASDLDEATRKQLSHGQKVTELLKQKQYAPMSVAQQGLVLFAAERGYLEDVELAKIGSFEAALLAYADRDHAPLMQEINQTGGYNDEIEGKLKSLLDSFKATQSW.

Position 169–176 (169–176 (GDRQTGKT)) interacts with ATP.

This sequence belongs to the ATPase alpha/beta chains family. F-type ATPases have 2 components, CF(1) - the catalytic core - and CF(0) - the membrane proton channel. CF(1) has five subunits: alpha(3), beta(3), gamma(1), delta(1), epsilon(1). CF(0) has three main subunits: a(1), b(2) and c(9-12). The alpha and beta chains form an alternating ring which encloses part of the gamma chain. CF(1) is attached to CF(0) by a central stalk formed by the gamma and epsilon chains, while a peripheral stalk is formed by the delta and b chains.

The protein resides in the cell inner membrane. The enzyme catalyses ATP + H2O + 4 H(+)(in) = ADP + phosphate + 5 H(+)(out). Its function is as follows. Produces ATP from ADP in the presence of a proton gradient across the membrane. The alpha chain is a regulatory subunit. The chain is ATP synthase subunit alpha from Cronobacter sakazakii (strain ATCC BAA-894) (Enterobacter sakazakii).